We begin with the raw amino-acid sequence, 91 residues long: Large ribosomal subunit protein bL27 (91 aa).

Residues methionine 1–phenylalanine 26 form a disordered region.

Belongs to the bacterial ribosomal protein bL27 family.

This Chloroflexus aurantiacus (strain ATCC 29366 / DSM 635 / J-10-fl) protein is Large ribosomal subunit protein bL27.